The sequence spans 54 residues: Relaxin (54 aa).

At glutamine 1 the chain carries Pyrrolidone carboxylic acid. 3 cysteine pairs are disulfide-bonded: cysteine 13/cysteine 41, cysteine 25/cysteine 54, and cysteine 40/cysteine 45.

The protein belongs to the insulin family. As to quaternary structure, heterodimer of a B chain and an A chain linked by two disulfide bonds.

Its subcellular location is the secreted. The function of relaxin in an oviparous species is not yet known. The protein is Relaxin of Squalus acanthias (Spiny dogfish).